A 434-amino-acid polypeptide reads, in one-letter code: Chaperone SurA (434 aa).

Residues 1–22 form the signal peptide; that stretch reads MKPSKHLIFALFALAISQPTMA. PpiC domains follow at residues 173-274 and 283-383; these read DVEY…KIMD and IEEV…QLEE.

The protein localises to the periplasm. It carries out the reaction [protein]-peptidylproline (omega=180) = [protein]-peptidylproline (omega=0). Chaperone involved in the correct folding and assembly of outer membrane proteins. Recognizes specific patterns of aromatic residues and the orientation of their side chains, which are found more frequently in integral outer membrane proteins. May act in both early periplasmic and late outer membrane-associated steps of protein maturation. This Shewanella sp. (strain MR-4) protein is Chaperone SurA.